Reading from the N-terminus, the 198-residue chain is Lipoprotein signal peptidase (198 aa).

The interval 1–34 (MDDERVSQDPTAENETDAEDRNDDDPSGSAPPQP) is disordered. Acidic residues predominate over residues 12-26 (AENETDAEDRNDDDP). 3 helical membrane passes run 42–62 (LLFV…ILAV), 92–112 (MATG…IGVV), and 120–140 (SPWW…NLVD). Active-site residues include aspartate 155 and aspartate 169. A helical membrane pass occupies residues 167–187 (VADSGIVCGAILLVVLTLIGL).

Belongs to the peptidase A8 family.

It localises to the cell membrane. It catalyses the reaction Release of signal peptides from bacterial membrane prolipoproteins. Hydrolyzes -Xaa-Yaa-Zaa-|-(S,diacylglyceryl)Cys-, in which Xaa is hydrophobic (preferably Leu), and Yaa (Ala or Ser) and Zaa (Gly or Ala) have small, neutral side chains.. It functions in the pathway protein modification; lipoprotein biosynthesis (signal peptide cleavage). In terms of biological role, this protein specifically catalyzes the removal of signal peptides from prolipoproteins. In Rhodococcus jostii (strain RHA1), this protein is Lipoprotein signal peptidase.